The primary structure comprises 1026 residues: Retinoblastoma-related protein 1 (1026 aa).

The interval 416-616 is domain A; sequence TPVSTAMTTA…EKGSSMYNSL (201 aa). A pocket region spans residues 416-872; sequence TPVSTAMTTA…NEVFIPSVKP (457 aa). Residues 617–737 are spacer; it reads AVARPALSVE…PGGGGETCAE (121 aa). The disordered stretch occupies residues 656–680; it reads PVPSLPKPEPMSAQNGDPRSPKRPC. A domain B region spans residues 738-872; the sequence is TGISVFFSKI…NEVFIPSVKP (135 aa). The tract at residues 1007-1026 is disordered; the sequence is QNGSSASSSGAPLKSEQPDS.

The protein belongs to the retinoblastoma protein (RB) family.

It is found in the nucleus. Functionally, regulator of biological processes that recruits a histone deacetylase to control gene transcription. May play a role in the entry into mitosis, negatively regulating the cell proliferation. Formation of stable complexes with geminiviridae replication-associated proteins may create a cellular environment which favors viral DNA replication. This is Retinoblastoma-related protein 1 (RBR1) from Pisum sativum (Garden pea).